Reading from the N-terminus, the 180-residue chain is ATP-dependent protease subunit HslV (180 aa).

Threonine 6 is a catalytic residue. The Na(+) site is built by glycine 162, cysteine 165, and threonine 168.

It belongs to the peptidase T1B family. HslV subfamily. A double ring-shaped homohexamer of HslV is capped on each side by a ring-shaped HslU homohexamer. The assembly of the HslU/HslV complex is dependent on binding of ATP.

The protein resides in the cytoplasm. It carries out the reaction ATP-dependent cleavage of peptide bonds with broad specificity.. Allosterically activated by HslU binding. Its function is as follows. Protease subunit of a proteasome-like degradation complex believed to be a general protein degrading machinery. In Oleidesulfovibrio alaskensis (strain ATCC BAA-1058 / DSM 17464 / G20) (Desulfovibrio alaskensis), this protein is ATP-dependent protease subunit HslV.